We begin with the raw amino-acid sequence, 300 residues long: LysM and putative peptidoglycan-binding domain-containing protein 3 (300 aa).

At M1 to G216 the chain is on the extracellular side. N-linked (GlcNAc...) asparagine glycosylation is found at N7 and N26. S55 bears the Phosphoserine mark. In terms of domain architecture, LysM spans L65–I109. Positions P136–G157 are disordered. The segment covering E140–A156 has biased composition (polar residues). N199 is a glycosylation site (N-linked (GlcNAc...) asparagine). The helical transmembrane segment at W217–L237 threads the bilayer. Residues Y238–D300 lie on the Cytoplasmic side of the membrane. Residues V253–D300 form a disordered region. Over residues Q286–D300 the composition is skewed to basic and acidic residues.

The protein localises to the cell membrane. The protein resides in the golgi apparatus. Functionally, essential for Golgi structural integrity. This Rattus norvegicus (Rat) protein is LysM and putative peptidoglycan-binding domain-containing protein 3 (Lysmd3).